A 1252-amino-acid chain; its full sequence is DNA-directed RNA polymerase subunit beta (1252 aa).

The protein belongs to the RNA polymerase beta chain family. As to quaternary structure, the RNAP catalytic core consists of 2 alpha, 1 beta, 1 beta' and 1 omega subunit. When a sigma factor is associated with the core the holoenzyme is formed, which can initiate transcription.

The enzyme catalyses RNA(n) + a ribonucleoside 5'-triphosphate = RNA(n+1) + diphosphate. Its function is as follows. DNA-dependent RNA polymerase catalyzes the transcription of DNA into RNA using the four ribonucleoside triphosphates as substrates. The polypeptide is DNA-directed RNA polymerase subunit beta (Chlamydia caviae (strain ATCC VR-813 / DSM 19441 / 03DC25 / GPIC) (Chlamydophila caviae)).